We begin with the raw amino-acid sequence, 352 residues long: CD5 antigen-like (352 aa).

An N-terminal signal peptide occupies residues 1–21 (MAPLFNLMLAILSIFVGSCFS). SRCR domains are found at residues 27 to 128 (VQLV…AQCE), 141 to 241 (VRLV…MECE), and 246 to 348 (LKLV…VICT). 11 disulfides stabilise this stretch: C36-C70, C52-C117, C65-C127, C98-C108, C166-C230, C179-C240, C211-C221, C255-C289, C271-C337, C284-C347, and C317-C327. N-linked (GlcNAc...) asparagine glycosylation occurs at N99. An N-linked (GlcNAc...) asparagine glycan is attached at N229.

As to quaternary structure, interacts with FASN; the interaction is direct. Interacts (via SRCR2 and SRCR3) with pentameric IgM (via Fc region); disulfide-linked. Post-translationally, N-glycosylated. N-glycan at Asn-99 possesses only alpha2,6-sialylated terminals, while Asn-229 possesses both alpha2,6-sialylated and non-sialylated terminals. N-glycosylation increases secretion. In terms of tissue distribution, specifically expressed in tissue macrophages. Expressed in thymus, liver, spleen and lymph nodes. Present in Th17 cells; mainly present in non-pathogenic Th17 cells.

It localises to the secreted. The protein resides in the cytoplasm. Its function is as follows. Secreted protein that acts as a key regulator of lipid synthesis: mainly expressed by macrophages in lymphoid and inflamed tissues and regulates mechanisms in inflammatory responses, such as infection or atherosclerosis. Able to inhibit lipid droplet size in adipocytes. Following incorporation into mature adipocytes via CD36-mediated endocytosis, associates with cytosolic FASN, inhibiting fatty acid synthase activity and leading to lipolysis, the degradation of triacylglycerols into glycerol and free fatty acids (FFA). CD5L-induced lipolysis occurs with progression of obesity: participates in obesity-associated inflammation following recruitment of inflammatory macrophages into adipose tissues, a cause of insulin resistance and obesity-related metabolic disease. Regulation of intracellular lipids mediated by CD5L has a direct effect on transcription regulation mediated by nuclear receptors ROR-gamma (RORC). Acts as a key regulator of metabolic switch in T-helper Th17 cells. Regulates the expression of pro-inflammatory genes in Th17 cells by altering the lipid content and limiting synthesis of cholesterol ligand of RORC, the master transcription factor of Th17-cell differentiation. CD5L is mainly present in non-pathogenic Th17 cells, where it decreases the content of polyunsaturated fatty acyls (PUFA), affecting two metabolic proteins MSMO1 and CYP51A1, which synthesize ligands of RORC, limiting RORC activity and expression of pro-inflammatory genes. Participates in obesity-associated autoimmunity via its association with IgM, interfering with the binding of IgM to Fcalpha/mu receptor and enhancing the development of long-lived plasma cells that produce high-affinity IgG autoantibodies. Also acts as an inhibitor of apoptosis in macrophages: promotes macrophage survival from the apoptotic effects of oxidized lipids in case of atherosclerosis. Involved in early response to microbial infection against various pathogens by acting as a pattern recognition receptor and by promoting autophagy. This Mus musculus (Mouse) protein is CD5 antigen-like (Cd5l).